A 251-amino-acid polypeptide reads, in one-letter code: 5'-nucleotidase SurE (251 aa).

Asp-8, Asp-9, Ser-39, and Asn-95 together coordinate a divalent metal cation.

It belongs to the SurE nucleotidase family. It depends on a divalent metal cation as a cofactor.

It localises to the cytoplasm. It catalyses the reaction a ribonucleoside 5'-phosphate + H2O = a ribonucleoside + phosphate. Functionally, nucleotidase that shows phosphatase activity on nucleoside 5'-monophosphates. The polypeptide is 5'-nucleotidase SurE (Clostridium botulinum (strain Alaska E43 / Type E3)).